We begin with the raw amino-acid sequence, 1020 residues long: Valine--tRNA ligase (1020 aa).

The 'HIGH' region signature appears at 45–55 (PNVTGALHVGH). A 'KMSKS' region motif is present at residues 661 to 665 (KMSKT). An ATP-binding site is contributed by lysine 664. Positions 955–1020 (AEKDRLEKAK…EALARLAELG (66 aa)) form a coiled coil.

It belongs to the class-I aminoacyl-tRNA synthetase family. ValS type 1 subfamily. Monomer.

The protein localises to the cytoplasm. It catalyses the reaction tRNA(Val) + L-valine + ATP = L-valyl-tRNA(Val) + AMP + diphosphate. Functionally, catalyzes the attachment of valine to tRNA(Val). As ValRS can inadvertently accommodate and process structurally similar amino acids such as threonine, to avoid such errors, it has a 'posttransfer' editing activity that hydrolyzes mischarged Thr-tRNA(Val) in a tRNA-dependent manner. The protein is Valine--tRNA ligase of Ruegeria pomeroyi (strain ATCC 700808 / DSM 15171 / DSS-3) (Silicibacter pomeroyi).